Here is a 645-residue protein sequence, read N- to C-terminus: Protein LHY (645 aa).

S6 carries the phosphoserine modification. In terms of domain architecture, HTH myb-type spans 19 to 73 (TITKQRERWTEDEHERFLEALRLYGRAWQRIEEHIGTKTAVQIRSHAQKFFTKLE). The segment at residues 46–69 (WQRIEEHIGTKTAVQIRSHAQKFF) is a DNA-binding region (H-T-H motif). Disordered regions lie at residues 89–127 (IEIP…AKLV), 149–212 (EKTS…GTTV), 410–437 (QNLA…ADSK), and 458–500 (AQKK…TDEN). Residues 110–120 (NNGTSSSQVSS) show a composition bias toward polar residues. Positions 149 to 158 (EKTSTGKENQ) are enriched in basic and acidic residues. Polar residues predominate over residues 159-169 (DENCSGVSTVN). Over residues 197-207 (VPKKNKDKDGN) the composition is skewed to basic and acidic residues. Residues 468–478 (SCGSNTPSGSD) are compositionally biased toward polar residues. A compositionally biased stretch (basic and acidic residues) spans 483 to 498 (ALDKMEKDKEDVKETD).

Homodimer or heterodimer with CCA1. Interacts with CCA1 (via internal domain); independently of photoperiod. Functions probably as part of a large complex. Interacts with CKB1 and CKB3. Interacts with LNK1 and LNK2. Post-translationally, phosphorylated by CK2. In terms of tissue distribution, expressed in leaves, roots, stems, flowers and siliques.

It localises to the nucleus. In terms of biological role, transcription factor involved in the circadian clock. Binds to the promoter region of APRR1/TOC1 and TCP21/CHE to repress their transcription. Represses both CCA1 and itself. May recognize the promoter of JMJ14 to regulates its expression during the night in a circadian manner. In Arabidopsis thaliana (Mouse-ear cress), this protein is Protein LHY.